Reading from the N-terminus, the 92-residue chain is MANSAQARKRARQAAKANSHNSALRSKFRTAIKAVRKAIDAGDQAKAAELFKAATKTIDTIADKKIVHKNKAARHKSRLSAAVKGLQAQAAQ.

The interval 1-25 (MANSAQARKRARQAAKANSHNSALR) is disordered.

Belongs to the bacterial ribosomal protein bS20 family.

In terms of biological role, binds directly to 16S ribosomal RNA. The polypeptide is Small ribosomal subunit protein bS20 (Burkholderia mallei (strain NCTC 10247)).